The sequence spans 107 residues: L-rhamnose mutarotase (107 aa).

Tyrosine 21 lines the substrate pocket. Histidine 25 functions as the Proton donor in the catalytic mechanism. Substrate contacts are provided by residues tyrosine 44 and 79-80 (WW).

It belongs to the rhamnose mutarotase family. As to quaternary structure, homodimer.

It localises to the cytoplasm. It carries out the reaction alpha-L-rhamnose = beta-L-rhamnose. It participates in carbohydrate metabolism; L-rhamnose metabolism. In terms of biological role, involved in the anomeric conversion of L-rhamnose. The protein is L-rhamnose mutarotase of Agrobacterium fabrum (strain C58 / ATCC 33970) (Agrobacterium tumefaciens (strain C58)).